A 548-amino-acid polypeptide reads, in one-letter code: Biotin-dependent acetyl-/propionyl-coenzyme A carboxylase beta5 subunit (548 aa).

The interval 1–23 (MTSVTDRSAHSAERSTEHTIDIH) is disordered. Residues 7-21 (RSAHSAERSTEHTID) are compositionally biased toward basic and acidic residues. Residues 25-281 (TAGKLAELHK…NNSTDAPRYQ (257 aa)) enclose the CoA carboxyltransferase N-terminal domain. One can recognise a CoA carboxyltransferase C-terminal domain in the interval 295-541 (DEDLELDTLI…ERKIAQLPPK (247 aa)).

The protein belongs to the AccD/PCCB family. In terms of assembly, the biotin-dependent acyl-CoA carboxylase complex is composed of AccA3, which contains the biotin carboxylase (BC) and biotin carboxyl carrier protein (BCCP) domains, and AccD5, which contains the carboxyl transferase (CT) domain.

It catalyses the reaction N(6)-carboxybiotinyl-L-lysyl-[protein] + acetyl-CoA = N(6)-biotinyl-L-lysyl-[protein] + malonyl-CoA. It carries out the reaction N(6)-carboxybiotinyl-L-lysyl-[protein] + propanoyl-CoA = methylmalonyl-CoA + N(6)-biotinyl-L-lysyl-[protein]. It participates in lipid metabolism; mycolic acid biosynthesis. Functionally, component of a biotin-dependent acyl-CoA carboxylase complex. This subunit transfers the CO2 from carboxybiotin to the CoA ester substrate. When associated with the alpha3 subunit AccA3, is involved in the carboxylation of acetyl-CoA and propionyl-CoA. This chain is Biotin-dependent acetyl-/propionyl-coenzyme A carboxylase beta5 subunit (accD5), found in Mycobacterium tuberculosis (strain CDC 1551 / Oshkosh).